Consider the following 270-residue polypeptide: BPI fold-containing family A member 5 (270 aa).

The first 19 residues, 1–19, serve as a signal peptide directing secretion; it reads MFLAGSFIVLCGLLAQSTA. A disulfide bridge links C196 with C238.

Belongs to the BPI/LBP/Plunc superfamily. Plunc family. As to expression, expressed in interpapillar epithelium of the anterior part of the tongue.

The protein resides in the secreted. Functionally, may play a role in innate immunity in the oral cavity. The polypeptide is BPI fold-containing family A member 5 (Bpifa5) (Mus musculus (Mouse)).